The primary structure comprises 199 residues: Fe/S biogenesis protein NfuA (199 aa).

[4Fe-4S] cluster-binding residues include Cys151 and Cys154.

Belongs to the NfuA family. Homodimer. [4Fe-4S] cluster is required as a cofactor.

Involved in iron-sulfur cluster biogenesis. Binds a 4Fe-4S cluster, can transfer this cluster to apoproteins, and thereby intervenes in the maturation of Fe/S proteins. Could also act as a scaffold/chaperone for damaged Fe/S proteins. This Stenotrophomonas maltophilia (strain R551-3) protein is Fe/S biogenesis protein NfuA.